The sequence spans 962 residues: Translation initiation factor IF-2 (962 aa).

Residues 52–77 (RSHGQADDSSRKKITLTKRETSEIRQ) show a composition bias toward basic and acidic residues. Disordered regions lie at residues 52-87 (RSHG…TRTV) and 121-378 (AVEE…EPVV). Positions 78-87 (SDGTGKTRTV) are enriched in polar residues. Basic and acidic residues-rich tracts occupy residues 123–183 (EEAR…KAEE), 197–250 (DSSR…EAEA), and 267–278 (PSERKAEEKKAE). Gly residues predominate over residues 342–355 (TSGGVGGWRGGPRG). The 170-residue stretch at 462–631 (PRPPVVTVMG…LLQAEVLELT (170 aa)) folds into the tr-type G domain. The interval 471–478 (GHVDHGKT) is G1. 471-478 (GHVDHGKT) contributes to the GTP binding site. The tract at residues 496–500 (GITQH) is G2. Residues 517–520 (DTPG) are G3. GTP-binding positions include 517-521 (DTPGH) and 571-574 (NKID). The G4 stretch occupies residues 571–574 (NKID). Residues 607-609 (SAK) are G5.

Belongs to the TRAFAC class translation factor GTPase superfamily. Classic translation factor GTPase family. IF-2 subfamily.

The protein localises to the cytoplasm. In terms of biological role, one of the essential components for the initiation of protein synthesis. Protects formylmethionyl-tRNA from spontaneous hydrolysis and promotes its binding to the 30S ribosomal subunits. Also involved in the hydrolysis of GTP during the formation of the 70S ribosomal complex. The protein is Translation initiation factor IF-2 of Cupriavidus necator (strain ATCC 17699 / DSM 428 / KCTC 22496 / NCIMB 10442 / H16 / Stanier 337) (Ralstonia eutropha).